Here is a 566-residue protein sequence, read N- to C-terminus: Myo-inositol transporter 1A (566 aa).

The Cytoplasmic portion of the chain corresponds to 1 to 64 (MSDEKNYGIS…ERTEKLTKFV (64 aa)). The helical transmembrane segment at 65–85 (VGLALFASVSGFCFGFDTGVI) threads the bilayer. Topologically, residues 86–106 (SAALVSIKDDFGHILDDTEKE) are extracellular. Residues 107–127 (WISAATSCGALVGALSSGALA) form a helical membrane-spanning segment. Residues 128–140 (DRVGRKWTLAVGD) are Cytoplasmic-facing. Residues 141-161 (VWFTLGAIIICSSFSVVQMIV) traverse the membrane as a helical segment. Over 162 to 163 (GR) the chain is Extracellular. Residues 164–184 (AVLGLGVGTAAAIAPLYIAEV) traverse the membrane as a helical segment. Over 185 to 192 (APTRFRGA) the chain is Cytoplasmic. A helical transmembrane segment spans residues 193–213 (LVTVQSIAITGGQFFSYCIGI). Residues 214–222 (PLTGHNGWR) are Extracellular-facing. A helical membrane pass occupies residues 223–243 (IQFAIGIVPAVVQAAVVHFLP). The Cytoplasmic portion of the chain corresponds to 244-313 (ESPRYDLLRG…VLTEGKYRKP (70 aa)). A helical transmembrane segment spans residues 314 to 334 (AITALGIGIFQQLCGFNSLMY). Residues 335-349 (YAATIFSYAGFDNPT) are Extracellular-facing. The chain crosses the membrane as a helical span at residues 350–370 (SVGLIVSGTNWFFTFVAMMIL). The Cytoplasmic segment spans residues 371–377 (DRVGKRR). Residues 378–398 (ILLSTYPGMIAGLALASVAFW) traverse the membrane as a helical segment. Topologically, residues 399 to 421 (KMTGSTGHRLVEGTEYPQQWSNM) are extracellular. A helical membrane pass occupies residues 422 to 442 (MLGMMVVFIAFYATGSGNITW). Topologically, residues 443–458 (TVGEMFPLEMRGIGAS) are cytoplasmic. Residues 459 to 479 (ILAGGVWAANIVISATFLTLM) form a helical membrane-spanning segment. Topologically, residues 480 to 485 (NAIGPT) are extracellular. A helical membrane pass occupies residues 486–506 (PTFALYAGICLAGLIFIYFCY). The Cytoplasmic portion of the chain corresponds to 507–566 (PEPSGLSLEEIQIIYNYGFGVQKSREIRAEHKLKAQEMRDRANSHIGGSATASDDQLNKV). Positions 546-566 (DRANSHIGGSATASDDQLNKV) are disordered. The span at 556 to 566 (ATASDDQLNKV) shows a compositional bias: polar residues.

It belongs to the major facilitator superfamily. Sugar transporter (TC 2.A.1.1) family.

The protein localises to the cell membrane. The enzyme catalyses myo-inositol(out) + H(+)(out) = myo-inositol(in) + H(+)(in). Functionally, major transporter for myo-inositol. Plays a role in the traversal of the host blood-brain barrier. The chain is Myo-inositol transporter 1A from Cryptococcus neoformans var. grubii serotype A (strain H99 / ATCC 208821 / CBS 10515 / FGSC 9487) (Filobasidiella neoformans var. grubii).